The following is a 122-amino-acid chain: MIQVPSTLNVADNTGVKKLKCIKVLGGSRRRYATLGDVIICSVTDIIPTCSIEKGKVVKAVIVRVKKEVRRPDGSYIRFDENAAVIVDDKKEPRGKRIFGPVARELRDRGFMKIVSLAPEVI.

The protein belongs to the universal ribosomal protein uL14 family. In terms of assembly, part of the 50S ribosomal subunit. Forms a cluster with proteins L3 and L19. In the 70S ribosome, L14 and L19 interact and together make contacts with the 16S rRNA in bridges B5 and B8.

Its function is as follows. Binds to 23S rRNA. Forms part of two intersubunit bridges in the 70S ribosome. The chain is Large ribosomal subunit protein uL14 from Brachyspira hyodysenteriae (strain ATCC 49526 / WA1).